Reading from the N-terminus, the 489-residue chain is Bifunctional protein HldE (489 aa).

The segment at Met-1 to Pro-328 is ribokinase. An ATP-binding site is contributed by Asn-206 to Glu-209. Asp-276 is an active-site residue. Residues Leu-357–Gly-489 form a cytidylyltransferase region.

It in the N-terminal section; belongs to the carbohydrate kinase PfkB family. In the C-terminal section; belongs to the cytidylyltransferase family. As to quaternary structure, homodimer.

The catalysed reaction is D-glycero-beta-D-manno-heptose 7-phosphate + ATP = D-glycero-beta-D-manno-heptose 1,7-bisphosphate + ADP + H(+). It catalyses the reaction D-glycero-beta-D-manno-heptose 1-phosphate + ATP + H(+) = ADP-D-glycero-beta-D-manno-heptose + diphosphate. Its pathway is nucleotide-sugar biosynthesis; ADP-L-glycero-beta-D-manno-heptose biosynthesis; ADP-L-glycero-beta-D-manno-heptose from D-glycero-beta-D-manno-heptose 7-phosphate: step 1/4. The protein operates within nucleotide-sugar biosynthesis; ADP-L-glycero-beta-D-manno-heptose biosynthesis; ADP-L-glycero-beta-D-manno-heptose from D-glycero-beta-D-manno-heptose 7-phosphate: step 3/4. Functionally, catalyzes the phosphorylation of D-glycero-D-manno-heptose 7-phosphate at the C-1 position to selectively form D-glycero-beta-D-manno-heptose-1,7-bisphosphate. Catalyzes the ADP transfer from ATP to D-glycero-beta-D-manno-heptose 1-phosphate, yielding ADP-D-glycero-beta-D-manno-heptose. The sequence is that of Bifunctional protein HldE from Desulfatibacillum aliphaticivorans.